The sequence spans 276 residues: uncharacterized protein (276 aa).

In terms of domain architecture, AB hydrolase-1 spans Pro20–Ser137.

This sequence belongs to the AB hydrolase superfamily.

This is an uncharacterized protein from Staphylococcus aureus (strain MRSA252).